The sequence spans 279 residues: Biotin synthase (279 aa).

The 228-residue stretch at 1–228 (MKDIFLCSIC…SARLMIAGGR (228 aa)) folds into the Radical SAM core domain. [4Fe-4S] cluster contacts are provided by Cys-17, Cys-21, and Cys-24. [2Fe-2S] cluster contacts are provided by Cys-61, Cys-96, Cys-154, and Arg-221.

The protein belongs to the radical SAM superfamily. Biotin synthase family. As to quaternary structure, homodimer. [4Fe-4S] cluster is required as a cofactor. Requires [2Fe-2S] cluster as cofactor.

The catalysed reaction is (4R,5S)-dethiobiotin + (sulfur carrier)-SH + 2 reduced [2Fe-2S]-[ferredoxin] + 2 S-adenosyl-L-methionine = (sulfur carrier)-H + biotin + 2 5'-deoxyadenosine + 2 L-methionine + 2 oxidized [2Fe-2S]-[ferredoxin]. Its pathway is cofactor biosynthesis; biotin biosynthesis; biotin from 7,8-diaminononanoate: step 2/2. In terms of biological role, catalyzes the conversion of dethiobiotin (DTB) to biotin by the insertion of a sulfur atom into dethiobiotin via a radical-based mechanism. In Wolinella succinogenes (strain ATCC 29543 / DSM 1740 / CCUG 13145 / JCM 31913 / LMG 7466 / NCTC 11488 / FDC 602W) (Vibrio succinogenes), this protein is Biotin synthase.